Consider the following 100-residue polypeptide: Small ubiquitin-related modifier 1 (100 aa).

Residues 1–12 (MSANQEEDKKPG) are compositionally biased toward basic and acidic residues. Positions 1 to 21 (MSANQEEDKKPGDGGAHINLK) are disordered. The Ubiquitin-like domain occupies 16-93 (AHINLKVKGQ…IDAMLHQTGG (78 aa)). Gly-93 is covalently cross-linked (Glycyl lysine isopeptide (Gly-Lys) (interchain with K-? in acceptor proteins)).

The protein belongs to the ubiquitin family. SUMO subfamily. As to quaternary structure, interacts with SAE2, SCE1, SIZ1 and MMS21. Interacts with HSFA2. Covalently attached to ABI5, FLD, GTE3, HSFA2 and ICE1.

It is found in the nucleus. The protein resides in the cytoplasm. Its function is as follows. Ubiquitin-like protein which can be covalently attached to target lysines as a monomer. Does not seem to be involved in protein degradation and may function as an antagonist of ubiquitin in the degradation process. Required for the massive protein sumoylation in the nucleus induced by heat shock and controlled by SIZ1. Involved in the regulation of the heat stress transcription factor HSFA2 in acquired thermotolerance. The chain is Small ubiquitin-related modifier 1 from Arabidopsis thaliana (Mouse-ear cress).